We begin with the raw amino-acid sequence, 191 residues long: UPF0149 protein VS_2635 (191 aa).

Belongs to the UPF0149 family.

This is UPF0149 protein VS_2635 from Vibrio atlanticus (strain LGP32) (Vibrio splendidus (strain Mel32)).